The sequence spans 77 residues: Acyl carrier protein (77 aa).

Residues 1 to 76 (MENFDKVKDI…DAVNFINNLE (76 aa)) enclose the Carrier domain. Position 36 is an O-(pantetheine 4'-phosphoryl)serine (Ser36).

It belongs to the acyl carrier protein (ACP) family. In terms of processing, 4'-phosphopantetheine is transferred from CoA to a specific serine of apo-ACP by AcpS. This modification is essential for activity because fatty acids are bound in thioester linkage to the sulfhydryl of the prosthetic group.

The protein resides in the cytoplasm. The protein operates within lipid metabolism; fatty acid biosynthesis. Its function is as follows. Carrier of the growing fatty acid chain in fatty acid biosynthesis. This chain is Acyl carrier protein, found in Staphylococcus carnosus (strain TM300).